We begin with the raw amino-acid sequence, 228 residues long: Probable septum site-determining protein MinC (228 aa).

It belongs to the MinC family. Interacts with MinD and FtsZ.

Its function is as follows. Cell division inhibitor that blocks the formation of polar Z ring septums. Rapidly oscillates between the poles of the cell to destabilize FtsZ filaments that have formed before they mature into polar Z rings. Prevents FtsZ polymerization. The chain is Probable septum site-determining protein MinC from Bacillus mycoides (strain KBAB4) (Bacillus weihenstephanensis).